A 450-amino-acid chain; its full sequence is Keratin, type I cytoskeletal 25 (450 aa).

The disordered stretch occupies residues 1 to 25 (MSLRLPSGSRRASPRPTTGSLRLSS). The tract at residues 1–78 (MSLRLPSGSR…VNEGGLLSGN (78 aa)) is head. Residues 79–114 (EKVTMQNLNDRLASYLENVRALEEANADLEQKIKGW) form a coil 1A region. Positions 79-394 (EKVTMQNLND…LLIGGDDGAC (316 aa)) constitute an IF rod domain. Positions 115-136 (YEKFGPGSCRGLDHDYSRYFPI) are linker 1. Residues 137 to 228 (IEDLKNQIIA…KNHKEEMQVL (92 aa)) form a coil 1B region. Residues 229 to 251 (QCAAGGNVNVEMNAAPGVDLTVL) form a linker 12 region. Residues 252–390 (LNNMRAEYEA…ETYCLLIGGD (139 aa)) form a coil 2 region. The interval 391-450 (DGACKSGGYKSKDYGAGNVGNQMKDPVKAIVVKKVLEEVDQRSKILTPRLHSLEEKSQSN) is tail. Residue Ser442 is modified to Phosphoserine.

It belongs to the intermediate filament family. In terms of assembly, heterodimer of a type I and a type II keratin. Heterodimer with type II keratin KRT5 leading to the formation of keratin intermediate filament (KIF) network. Interacts with KRT6A to form filaments.

The protein localises to the cytoplasm. Functionally, essential for the proper assembly of type I and type II keratin protein complexes and formation of keratin intermediate filaments in the inner root sheath (irs). Plays a role in the cytoskeleton organization. The sequence is that of Keratin, type I cytoskeletal 25 from Bos taurus (Bovine).